A 502-amino-acid polypeptide reads, in one-letter code: Lysine--tRNA ligase (502 aa).

Mg(2+) contacts are provided by E411 and E418.

Belongs to the class-II aminoacyl-tRNA synthetase family. In terms of assembly, homodimer. Requires Mg(2+) as cofactor.

The protein localises to the cytoplasm. The catalysed reaction is tRNA(Lys) + L-lysine + ATP = L-lysyl-tRNA(Lys) + AMP + diphosphate. The protein is Lysine--tRNA ligase of Clostridium tetani (strain Massachusetts / E88).